The chain runs to 384 residues: Nodal homolog 2-B (384 aa).

The N-terminal stretch at 1–18 (MASLGAILLFAIASLMHG) is a signal peptide. Positions 19–283 (RPIHSDRKGA…RVADARRHRR (265 aa)) are excised as a propeptide. N-linked (GlcNAc...) asparagine glycosylation is found at asparagine 71, asparagine 173, and asparagine 344. Cysteine 306 and cysteine 372 form a disulfide bridge.

This sequence belongs to the TGF-beta family. In terms of assembly, homodimer; disulfide-linked. Forms heterodimers with the TGF-beta family member derriere. Interacts with tsku; enhances nodal2 activity.

The protein localises to the secreted. In terms of biological role, cooperation and regulatory loops of multiple nodals are essential for mesendoderm patterning in early embryos. Essential for mesoderm formation and axial patterning during embryonic development. Activates the activin-like signaling pathway to induce dorsal and ventral mesoderm in animal cap ectoderm. In addition, also dorsalizes ventral marginal zone (VMZ) tissues during gastrulation. Induces muscle actin. Appears to act as both a short-range and long-range morphogen. The unprocessed protein inhibits bmp- and wnt-signaling. In Xenopus laevis (African clawed frog), this protein is Nodal homolog 2-B (nodal2-b).